The following is a 300-amino-acid chain: Putative S-adenosyl-L-methionine-dependent methyltransferase MAB_4328c (300 aa).

S-adenosyl-L-methionine is bound by residues aspartate 126 and 155-156; that span reads DL.

The protein belongs to the UPF0677 family.

In terms of biological role, exhibits S-adenosyl-L-methionine-dependent methyltransferase activity. This is Putative S-adenosyl-L-methionine-dependent methyltransferase MAB_4328c from Mycobacteroides abscessus (strain ATCC 19977 / DSM 44196 / CCUG 20993 / CIP 104536 / JCM 13569 / NCTC 13031 / TMC 1543 / L948) (Mycobacterium abscessus).